Reading from the N-terminus, the 224-residue chain is Myogenin (224 aa).

Phosphoserine; by CaMK2G occurs at positions 77 and 79. The 52-residue stretch at 81 to 132 (DRRRAATLREKRRLKKVNEAFEALKRSTLLNPNQRLPKVEILRSAIQYIERL) folds into the bHLH domain. At Thr-87 the chain carries Phosphothreonine; by CaMK2G.

Homodimer and heterodimer with E12; heterodimerization enhances MYOG DNA-binding and transcriptional activities. Interacts with SMARCA4/BRG1/BAF190A. Interacts (via C-terminal region) with SSRP1 and SUPT16H; the interaction is indicative of an interaction with the FACT complex. Interacts with CSRP3. Post-translationally, phosphorylated by CAMK2G on threonine and serine amino acids in a muscle activity-dependent manner. Phosphorylation of Thr-87 impairs both DNA-binding and trans-activation functions in contracting muscles.

It is found in the nucleus. In terms of biological role, acts as a transcriptional activator that promotes transcription of muscle-specific target genes and plays a role in muscle differentiation, cell cycle exit and muscle atrophy. Essential for the development of functional embryonic skeletal fiber muscle differentiation. However is dispensable for postnatal skeletal muscle growth; phosphorylation by CAMK2G inhibits its transcriptional activity in respons to muscle activity. Required for the recruitment of the FACT complex to muscle-specific promoter regions, thus promoting gene expression initiation. During terminal myoblast differentiation, plays a role as a strong activator of transcription at loci with an open chromatin structure previously initiated by MYOD1. Together with MYF5 and MYOD1, co-occupies muscle-specific gene promoter core regions during myogenesis. Also cooperates with myocyte-specific enhancer factor MEF2D and BRG1-dependent recruitment of SWI/SNF chromatin-remodeling enzymes to alter chromatin structure at myogenic late gene promoters. Facilitates cell cycle exit during terminal muscle differentiation through the up-regulation of miR-20a expression, which in turn represses genes involved in cell cycle progression. Binds to the E-box containing (E1) promoter region of the miR-20a gene. Also plays a role in preventing reversal of muscle cell differentiation. Contributes to the atrophy-related gene expression in adult denervated muscles. Induces fibroblasts to differentiate into myoblasts. The chain is Myogenin (MYOG) from Homo sapiens (Human).